The sequence spans 285 residues: Nucleotide-binding protein PFLU_0879 (285 aa).

8 to 15 (GRSGSGKS) serves as a coordination point for ATP. 60-63 (DARN) provides a ligand contact to GTP.

It belongs to the RapZ-like family.

Its function is as follows. Displays ATPase and GTPase activities. This chain is Nucleotide-binding protein PFLU_0879, found in Pseudomonas fluorescens (strain SBW25).